The primary structure comprises 314 residues: ATP synthase gamma chain (314 aa).

The protein belongs to the ATPase gamma chain family. In terms of assembly, F-type ATPases have 2 components, CF(1) - the catalytic core - and CF(0) - the membrane proton channel. CF(1) has five subunits: alpha(3), beta(3), gamma(1), delta(1), epsilon(1). CF(0) has three main subunits: a, b and c.

It is found in the cellular thylakoid membrane. Its function is as follows. Produces ATP from ADP in the presence of a proton gradient across the membrane. The gamma chain is believed to be important in regulating ATPase activity and the flow of protons through the CF(0) complex. The sequence is that of ATP synthase gamma chain from Gloeothece citriformis (strain PCC 7424) (Cyanothece sp. (strain PCC 7424)).